The sequence spans 434 residues: Trigger factor (434 aa).

Positions 161–246 (EDRVVIDFTG…VKQVQAPVLP (86 aa)) constitute a PPIase FKBP-type domain.

Belongs to the FKBP-type PPIase family. Tig subfamily.

The protein localises to the cytoplasm. It catalyses the reaction [protein]-peptidylproline (omega=180) = [protein]-peptidylproline (omega=0). In terms of biological role, involved in protein export. Acts as a chaperone by maintaining the newly synthesized protein in an open conformation. Functions as a peptidyl-prolyl cis-trans isomerase. The polypeptide is Trigger factor (Dechloromonas aromatica (strain RCB)).